A 1060-amino-acid chain; its full sequence is Anoctamin-8 (1060 aa).

The disordered stretch occupies residues 1–32 (MAEAASGAGDVTLEGERGKRPPPEGEPAAPAS). Alanine 2 is modified (N-acetylalanine). Over 2-244 (AEAASGAGDV…DDICDYFGVK (243 aa)) the chain is Cytoplasmic. The span at 14-23 (EGERGKRPPP) shows a compositional bias: basic and acidic residues. Residues 245–265 (IAMYFAWLGFYTSAMVYPAVF) traverse the membrane as a helical segment. Topologically, residues 266–281 (GSVLYTFTEADQTSRD) are extracellular. The helical transmembrane segment at 282-302 (VSCVVFALFNVIWSTLFLEEW) threads the bilayer. At 303–356 (KRRGAELAYKWGTLDSPGEAVEEPRPQFRGIRRISPITRAEEFYYPPWKRLLFQ) the chain is on the cytoplasmic side. Position 318 is a phosphoserine (serine 318). The chain crosses the membrane as a helical span at residues 357-377 (LLVSLPLCLACLICVFILMLG). Topologically, residues 378-400 (CFQLQELVLSVKGLPRLVRFLPK) are extracellular. A helical membrane pass occupies residues 401 to 421 (VMLALLVSVSAEGYKKLAVWL). At 422 to 437 (NDMENYRLESTYERHL) the chain is on the cytoplasmic side. The chain crosses the membrane as a helical span at residues 438 to 458 (IIKVVLFQFVNSYLSLFYIGF). Over 459–745 (YLKDMDRLKE…YEDTFQDYQE (287 aa)) the chain is Extracellular. Disordered stretches follow at residues 529–605 (AQAD…SLLD), 619–640 (GAGRRRPGPSPDGLLEEGSPTM), 653–672 (AEEDDEPEGPPGSPGPEPQT), and 680–723 (GEGR…HSPQ). The span at 534 to 547 (GGAGSRRCLGGGCG) shows a compositional bias: gly residues. Acidic residues-rich tracts occupy residues 549 to 559 (PEEENEEEEEA) and 581 to 602 (EEDEEEDDDEDEDEEYEGEEGS). The residue at position 665 (serine 665) is a Phosphoserine. A compositionally biased stretch (basic and acidic residues) spans 680–694 (GEGRDQGPDGDRDTE). Asparagine 708 carries an N-linked (GlcNAc...) asparagine glycan. Residues 746–766 (MFVQFGYVVLFSSAFPLAALC) traverse the membrane as a helical segment. The Cytoplasmic portion of the chain corresponds to 767-802 (ALVNNLIEIRSDAFKLCTGLQRPFGRRVESIGQWQK). The residue at position 796 (serine 796) is a Phosphoserine. The helical transmembrane segment at 803–823 (VMEAMGVLAIVVNCYLIGQCG) threads the bilayer. Residues 824-836 (QLQRLFPWLSPEA) lie on the Extracellular side of the membrane. Residues 837-857 (AIVSVVVLEHLALLVKYLIHV) form a helical membrane-spanning segment. Residues 858–1060 (AIPDIPGWVA…PRPEDAGHRP (203 aa)) are Cytoplasmic-facing. The tract at residues 884-1060 (HERQAQQRFQ…PRPEDAGHRP (177 aa)) is disordered. 2 stretches are compositionally biased toward basic and acidic residues: residues 899 to 927 (RREEEERQRHAEQQARRERDTGGREEARA) and 935 to 950 (VAERGAAKAKGSERPR). Residues 972–986 (TRPPAPTGCAPPPRS) show a composition bias toward pro residues. Arginine 991 bears the Asymmetric dimethylarginine; alternate mark. Position 991 is an omega-N-methylarginine; alternate (arginine 991). The residue at position 999 (arginine 999) is an Omega-N-methylarginine. The segment covering 1049–1060 (PEPRPEDAGHRP) has biased composition (basic and acidic residues).

The protein belongs to the anoctamin family. Predominant expression seen in epithelial tissues.

It is found in the cell membrane. Its function is as follows. Does not exhibit calcium-activated chloride channel (CaCC) activity. In Mus musculus (Mouse), this protein is Anoctamin-8 (Ano8).